The following is a 796-amino-acid chain: MKENYCLQAALVCLSMLYHSQAFALERRSHLHPSFHGHHEKGKEGQVLQRSKRGWVWNQFFVIEEYTGPDPVLVGRLHSDIDSGDGNIKYILSGEGAGTIFVIDDKSGNIHATKTLDREERAQYTLMAQAVDRDTNRPLEPPSEFIVKVQDINDNPPEFLHEIYHANVPERSNVGTSVIQVTASDADDPTYGNSAKLVYSILEGQPYFSVEAQTGIIRTALPNMDREAKEEYHVVIQAKDMGGHMGGLSGTTKVTITLTDVNDNPPKFPQSVYQMSVSEAAVPGEEVGRVKAKDPDIGENGLVTYNIVDGDGIELFEITTDYETQDGVVKLKKPVDFETKRAYSLKIEAANVHIDPKFISNGPFKDTVTVKISVEDADEPPMFLAPSYIHEVQENAAAGTVVGRVHAKDPDAANSPIRYSIDRHTDLDRFFTINPEDGFIKTTKPLDREETAWLNISVFAAEIHNRHQETKVPVAIRVLDVNDNAPKFAAPYEGFICESDHPKALSNQPIVTVSADDQDDTANGPRFIFSLPPEIMHNPNFTVRDNRDNTAGVYARRGGFSRQKQDFYLLPIVISDGGIPPMSSTNTLTIKVCGCDVNGALLSCNAEAYILNAGLSTGALIAILACIVILLVIVVLFVTLRRQKKEPLIVFEEEDVRENIITYDDEGGGEEDTEAFDIATLQNPDGINGFIPRKDIKPEYQYMPRPGLRPAPNSVDVDDFINTRIQEADNDPTAPPYDSIQIYGYEGRGSVAGSLSSLESATTDSDLDYDYLQNWGPRFKKLADLYGSKDTFDDDS.

The signal sequence occupies residues 1–24 (MKENYCLQAALVCLSMLYHSQAFA). Positions 25–53 (LERRSHLHPSFHGHHEKGKEGQVLQRSKR) are excised as a propeptide. Cadherin domains are found at residues 54-159 (GWVW…PPEF), 160-268 (LHEI…PPKF), 269-383 (PQSV…PPMF), 384-486 (LAPS…DNAP), and 487-612 (KFAA…YILN). Topologically, residues 54–617 (GWVWNQFFVI…AYILNAGLST (564 aa)) are extracellular. Residues N455 and N540 are each glycosylated (N-linked (GlcNAc...) asparagine). A helical transmembrane segment spans residues 618 to 640 (GALIAILACIVILLVIVVLFVTL). Residues 641-796 (RRQKKEPLIV…GSKDTFDDDS (156 aa)) are Cytoplasmic-facing. Position 788 is a phosphoserine (S788). The residue at position 791 (T791) is a Phosphothreonine.

As to quaternary structure, interacts with PCDH8. As to expression, selectively expressed in osteoblastic cell lines, precursor cell lines of osteoblasts, and primary osteoblastic cells from calvaria, as well as in lung, testis, and brain tissues at low levels.

Its subcellular location is the cell membrane. Functionally, cadherins are calcium-dependent cell adhesion proteins. They preferentially interact with themselves in a homophilic manner in connecting cells; cadherins may thus contribute to the sorting of heterogeneous cell types. Required for proper focal adhesion assembly. Involved in the regulation of cell migration. The polypeptide is Cadherin-11 (Cdh11) (Mus musculus (Mouse)).